A 1131-amino-acid chain; its full sequence is Plasma membrane ATPase (1131 aa).

The next 6 membrane-spanning stretches (helical) occupy residues proline 77–alanine 97, isoleucine 98–isoleucine 118, glycine 151–leucine 171, alanine 231–glycine 251, methionine 265–phenylalanine 285, and methionine 305–leucine 325. Aspartate 357 serves as the catalytic 4-aspartylphosphate intermediate. Residues aspartate 615 and aspartate 619 each coordinate Mg(2+). The next 5 helical transmembrane spans lie at alanine 642 to alanine 662, leucine 689 to phenylalanine 709, isoleucine 733 to alanine 753, leucine 884 to phenylalanine 904, and valine 946 to leucine 966. Basic and acidic residues predominate over residues lysine 994–phenylalanine 1010. Disordered stretches follow at residues lysine 994 to asparagine 1023 and arginine 1067 to glutamate 1131. Polar residues predominate over residues serine 1089–lysine 1100. Residues isoleucine 1118–glutamate 1131 are compositionally biased toward basic and acidic residues.

Belongs to the cation transport ATPase (P-type) (TC 3.A.3) family. Type IIIA subfamily.

The protein resides in the cell membrane. The catalysed reaction is ATP + H2O + H(+)(in) = ADP + phosphate + 2 H(+)(out). Its function is as follows. The plasma membrane ATPase of plants and fungi is a hydrogen ion pump. The proton gradient it generates drives the active transport of nutrients by H(+)-symport. The resulting external acidification and/or internal alkinization may mediate growth responses. This chain is Plasma membrane ATPase (PMA1), found in Dunaliella bioculata (Green alga).